Reading from the N-terminus, the 502-residue chain is Maturase K (502 aa).

It belongs to the intron maturase 2 family. MatK subfamily.

The protein resides in the plastid. It is found in the chloroplast. In terms of biological role, usually encoded in the trnK tRNA gene intron. Probably assists in splicing its own and other chloroplast group II introns. This chain is Maturase K, found in Stanleya pinnata (Prince's plume).